Consider the following 397-residue polypeptide: Elongation factor Tu (397 aa).

In terms of domain architecture, tr-type G spans 10–206; that stretch reads KPHVNIGTIG…AIDSYIPTPE (197 aa). The segment at 19-26 is G1; that stretch reads GHVDHGKT. 19–26 contributes to the GTP binding site; the sequence is GHVDHGKT. A Mg(2+)-binding site is contributed by T26. A G2 region spans residues 60–64; it reads GITIN. The segment at 81-84 is G3; the sequence is DCPG. Residues 81–85 and 136–139 each bind GTP; these read DCPGH and NKAD. Positions 136-139 are G4; the sequence is NKAD. Residues 174–176 are G5; sequence SAL.

This sequence belongs to the TRAFAC class translation factor GTPase superfamily. Classic translation factor GTPase family. EF-Tu/EF-1A subfamily. Monomer.

Its subcellular location is the cytoplasm. It carries out the reaction GTP + H2O = GDP + phosphate + H(+). Functionally, GTP hydrolase that promotes the GTP-dependent binding of aminoacyl-tRNA to the A-site of ribosomes during protein biosynthesis. The sequence is that of Elongation factor Tu from Clostridium botulinum (strain ATCC 19397 / Type A).